The chain runs to 593 residues: Sodium-independent sulfate anion transporter (593 aa).

The Extracellular portion of the chain corresponds to 1-34 (MAPDTCCCSATALRRRLPVLAWVPDYSLQWLRLD). A helical membrane pass occupies residues 35-55 (FIAGLSVGLTVIPQALAYAEV). Residue alanine 56 is a topological domain, cytoplasmic. A helical transmembrane segment spans residues 57–77 (GLPPQYGLYSAFMGCFVYFFL). Topologically, residues 78 to 82 (GTSRD) are extracellular. A helical membrane pass occupies residues 83–100 (VTLGPTAIMSLLVSFYTF). At 101 to 106 (REPAYA) the chain is on the cytoplasmic side. A helical membrane pass occupies residues 107-127 (VLLAFLSGCIQLAMGLLHLGF). Over 128–176 (LLDFISCPVIKGFTSAASITIGFGQIKNLLGLQKIPRQFFLQVYHTFLH) the chain is Extracellular. The helical transmembrane segment at 177–197 (IGETRVGDAVLGLASMLLLLV) threads the bilayer. At 198-233 (LKCMREHMPPPHPEMPLAVKFSRGLVWTVTTARNAL) the chain is on the cytoplasmic side. Residues 234–254 (VVSSAALIAYAFEVTGSHPFV) traverse the membrane as a helical segment. Residues 255-287 (LTGKIAEGLPPVRIPPFSVTRDNKTISFSEMVQ) lie on the Extracellular side of the membrane. The helical transmembrane segment at 288–308 (DMGAGLAVVPLMGLLESIAVA) threads the bilayer. Residues 309 to 324 (KSFASQNNYRIDANQE) are Cytoplasmic-facing. The chain crosses the membrane as a helical span at residues 325–345 (LLAIGLTNVLGSLVSSYPVTG). Over 346–361 (SFGRTAVNAQTGVCTP) the chain is Extracellular. A helical membrane pass occupies residues 362 to 382 (AGGLVTGALVLLSLNYLTSLF). A topological domain (cytoplasmic) is located at residue serine 383. A helical membrane pass occupies residues 384–404 (YIPKSALAAVIITAVTPLFDV). Residues 405–417 (KIFRSLWRVQRLD) lie on the Extracellular side of the membrane. Residues 418–438 (LLPLCVTFLLSFWEIQYGILA) form a helical membrane-spanning segment. Residues 439 to 593 (GSLVSLLILL…SSLLKSPSGP (155 aa)) lie on the Cytoplasmic side of the membrane. The region spanning 453–566 (RPKTQVSEGQ…EEAEKFLQQE (114 aa)) is the STAS domain. The tract at residues 564-593 (QQEPGTEPNSIHEDAVPEQRSSLLKSPSGP) is disordered. Residues 582 to 593 (QRSSLLKSPSGP) are compositionally biased toward polar residues.

It belongs to the SLC26A/SulP transporter (TC 2.A.53) family. In terms of tissue distribution, abundantly expressed in the cerebellum, with a predominant expression in Purkinje cells (at protein level). Predominantly expressed in the kidney and brain. In the kidney localizes in collecting duct intercalated cells (at protein level). As to expression, predominantly expressed in the brain with lower levels in the kidney.

The protein localises to the cell membrane. The protein resides in the lysosome membrane. Its subcellular location is the apical cell membrane. It localises to the basolateral cell membrane. It carries out the reaction hydrogencarbonate(in) + chloride(out) = hydrogencarbonate(out) + chloride(in). It catalyses the reaction sulfate(in) + H(+)(in) = sulfate(out) + H(+)(out). The catalysed reaction is oxalate(in) + chloride(out) = oxalate(out) + chloride(in). Its function is as follows. Sodium-independent anion exchanger mediating bicarbonate, chloride, sulfate and oxalate transport. Exhibits sodium-independent sulfate anion transporter activity that may cooperate with SLC26A2 to mediate DIDS-sensitive sulfate uptake into high endothelial venules endothelial cells (HEVEC). In the kidney, mediates chloride-bicarbonate exchange, facilitating V-ATPase-mediated acid secretion. May function as a chloride channel, playing an important role in moderating chloride homeostasis and neuronal activity in the cerebellum. This Mus musculus (Mouse) protein is Sodium-independent sulfate anion transporter.